We begin with the raw amino-acid sequence, 182 residues long: Plasmolipin (182 aa).

A disordered region spans residues 1-20 (MAEFPSKVNTRTSSPAQGGG). The Cytoplasmic segment spans residues 1–35 (MAEFPSKVNTRTSSPAQGGGAVVSTLSPDLGFVRS). The span at 7–16 (KVNTRTSSPA) shows a compositional bias: polar residues. In terms of domain architecture, MARVEL spans 32 to 166 (FVRSSLGALM…SAFLSFQAWR (135 aa)). The helical transmembrane segment at 36 to 56 (SLGALMLLQLVLGLLVWALIA) threads the bilayer. The Extracellular segment spans residues 57–68 (DTPYHLYPSYGW). A helical membrane pass occupies residues 69–89 (VMFVAVFLWLVTIIFFVLYLF). The Cytoplasmic segment spans residues 90 to 99 (QLHMKLYMVP). A helical transmembrane segment spans residues 100 to 120 (WPLVLMVFNVGATVLYITAFI). Topologically, residues 121–141 (TCSASVELTSLKGSQPYNQRA) are extracellular. A helical membrane pass occupies residues 142–162 (AASFFSCLVMIAYGVSAFLSF). The Cytoplasmic portion of the chain corresponds to 163 to 182 (QAWRGVGSNAATSQMAGGYA).

This sequence belongs to the MAL family. As to quaternary structure, forms oligomers. Phosphorylated.

It localises to the cell membrane. The protein localises to the myelin membrane. It is found in the apical cell membrane. Main component of the myelin sheath that plays an important role in myelin membrane biogenesis and myelination. Plays an essential function in apical endocytosis. Regulates epithelial development through the regulation of apical endocytosis. Part of the intracellular machinery that mediates basolateral-to-apical transport of ICAM-1, an essential adhesion receptor in epithelial cells, from the subapical compartment in hepatic epithelial cells. The sequence is that of Plasmolipin (PLLP) from Bos taurus (Bovine).